Reading from the N-terminus, the 189-residue chain is Protein Rex (189 aa).

A compositionally biased stretch (basic residues) spans M1 to P16. A disordered region spans residues M1–D27. Residues P2–T18 carry the Nuclear localization signal, and RNA-binding (RxRE) motif. The interval R56–S70 is homomultimerization. A Phosphoserine; by host modification is found at S70. The Nuclear export signal signature appears at L82–D93. A disordered region spans residues Y87–M189. The segment covering P105–L114 has biased composition (low complexity). The tract at residues P123–T131 is homomultimerization. The span at L143–P164 shows a compositional bias: polar residues. Residue T174 is modified to Phosphothreonine; by host. The residue at position 177 (S177) is a Phosphoserine; by host. The span at F178–M189 shows a compositional bias: pro residues.

It belongs to the deltaretrovirus Rex protein family. Homomultimer. Multimeric assembly is essential for activity and involves XPO1. Binds to human XPO1 and KPNB1. Interacts (via N-terminal nuclear localization signal) with human NPM1. Phosphorylated.

The protein resides in the host nucleus. The protein localises to the host nucleolus. Its subcellular location is the host cytoplasm. Its function is as follows. Rex escorts unspliced gag-pro-pol and singly spliced env mRNAs out of the nucleus of infected cells. These mRNAs carry a recognition sequence called Rex responsive element (RxRE or XRE) located at the 3' region of the long terminal repeat (LTR). This function is essential since most HTLV proteins are translated from unspliced or partially spliced pre-mRNAs that cannot exit the nucleus by the pathway used by fully processed cellular mRNAs. Rex itself is translated from a fully spliced mRNA that probably readily exits the nucleus. Rex's nuclear localization signal (NLS) binds directly to KPNB1/importin beta-1 without previous binding to KPNA1/importin alpha-1. KPNB1 binds to the GDP bound form of RAN (Ran-GDP) and targets Rex to the nucleus. In the nucleus, the conversion from Ran-GDP to Ran-GTP dissociates Rex from KPNB1 and allows Rex's binding to the RRE in viral pre-mRNAs. Rex multimerizes on the RRE via cooperative assembly. This multimerization is critical for its full biological activity, since it may shield the viral RNA from being spliced or down-regulated, and probably exposes Rex's nuclear export signal (NES) to the surface. Rex can then form a complex with XPO1/CRM1, RANBP3 and Ran-GTP, leading to nuclear export of the complex. Conversion from Ran-GTP to Ran-GDP mediates dissociation of the Rex/RRE/XPO1/RANBP3/RAN complex, so that Rex can return to the nucleus for a subsequent round of export. This Human T-cell leukemia virus 1 (isolate Caribbea HS-35 subtype A) (HTLV-1) protein is Protein Rex.